Reading from the N-terminus, the 1667-residue chain is Androglobin (1667 aa).

Positions 1–11 are enriched in basic residues; the sequence is MASKQTKKKEV. Disordered regions lie at residues 1-45, 347-387, and 540-566; these read MASK…KGKF, SLTT…KFSL, and GSDL…ITKA. The Calpain catalytic domain occupies 70–411; it reads KDKTGKSPVF…SLSDCSSAIQ (342 aa). Residues 353–384 are compositionally biased toward basic and acidic residues; sequence APEKSDKVPKEKADARDIGKKRSKDGEKEKFK. The span at 554–566 shows a compositional bias: polar residues; that stretch reads THSQTDLSQITKA. The Globin; C-terminal part domain occupies 763 to 890; the sequence is HICSMVSFVI…EEVSLVEWLD (128 aa). Heme b contacts are provided by glutamine 792 and histidine 824. One can recognise an IQ domain in the interval 906–935; sequence EVAAAIKIQAMWRGTYVRLLMKARIPDTKE. The region spanning 936-968 is the Globin; N-terminal part domain; that stretch reads NISVADTLQKVWAVLEMNLEQYAVSLLRLMFKS. Disordered regions lie at residues 1297-1355 and 1420-1522; these read INLG…QQED and TSDA…RSPT. Positions 1301 to 1315 are enriched in polar residues; the sequence is SPDSHTISEGQKSSV. 2 stretches are compositionally biased toward basic and acidic residues: residues 1325-1340 and 1433-1450; these read EKSS…KQAP and TKPK…KEPN. Over residues 1451-1468 the composition is skewed to polar residues; that stretch reads SKNSAGSESKEMTQTGSG. Positions 1487 to 1498 are enriched in low complexity; that stretch reads STSSESGGVSSP. Residues 1499–1511 show a composition bias toward basic and acidic residues; that stretch reads GKEEREQSTRKEN. A compositionally biased stretch (polar residues) spans 1512-1522; it reads IQTGPRTRSPT. Residues 1588-1629 adopt a coiled-coil conformation; that stretch reads QEERLKLKDEVLDMYKEMQDSLDEARQKIFDIREEYRNKLLE. The tract at residues 1646-1667 is disordered; sequence KLETEKMTPAPDTQKKKKGKKK.

The protein in the central section; belongs to the globin family. This sequence in the N-terminal section; belongs to the peptidase C2 family. As to quaternary structure, interacts with septin SEPT10; contributes to in vitro proteolytic cleavage of SEPT10 in a calmodulin-dependent manner. Interacts with CFAP69. Interacts with SPEF2. May interact with calmodulin.

The protein resides in the cell projection. It localises to the cilium. The protein localises to the flagellum. Probable chimeric globin with a bis-histidyl six-coordinate heme-iron atom through which it could bind dioxygen, carbon monoxide and nitric oxide. Required for sperm flagellum formation and maturation of elongating spermatids, thus playing an essential role in male fertility. This is Androglobin from Homo sapiens (Human).